The following is a 162-amino-acid chain: Dihydrofolate reductase (162 aa).

A DHFR domain is found at 3-161 (KITIIAACAE…VAYTFVHYLG (159 aa)). 7–9 (IAA) contributes to the substrate binding site. NADP(+)-binding positions include 8–9 (AA) and 16–21 (IGAGNA). Asp29 lines the substrate pocket. Residue 45–48 (GRKT) coordinates NADP(+). Position 60 (Arg60) interacts with substrate. Residues 65-68 (ISRQ) and 98-103 (MGGAQI) each bind NADP(+). Thr117 contacts substrate.

The protein belongs to the dihydrofolate reductase family.

The enzyme catalyses (6S)-5,6,7,8-tetrahydrofolate + NADP(+) = 7,8-dihydrofolate + NADPH + H(+). It participates in cofactor biosynthesis; tetrahydrofolate biosynthesis; 5,6,7,8-tetrahydrofolate from 7,8-dihydrofolate: step 1/1. Key enzyme in folate metabolism. Catalyzes an essential reaction for de novo glycine and purine synthesis, and for DNA precursor synthesis. This Neisseria gonorrhoeae protein is Dihydrofolate reductase (folA).